The chain runs to 109 residues: Transcription initiation factor IIA subunit 2 (109 aa).

Belongs to the TFIIA subunit 2 family. In terms of assembly, TFIIA is a heterodimer composed of the large toa1 and the small toa2 subunits.

The protein resides in the nucleus. The protein localises to the cytoplasm. Its function is as follows. TFIIA is a component of the transcription machinery of RNA polymerase II and plays an important role in transcriptional activation. TFIIA in a complex with tbp mediates transcriptional activity. The chain is Transcription initiation factor IIA subunit 2 (toa2) from Schizosaccharomyces pombe (strain 972 / ATCC 24843) (Fission yeast).